We begin with the raw amino-acid sequence, 43 residues long: Defensin (43 aa).

Cystine bridges form between Cys3–Cys34, Cys20–Cys39, and Cys24–Cys41.

The protein belongs to the invertebrate defensin family. Type 1 subfamily.

The protein resides in the secreted. In terms of biological role, antibacterial peptide. Affects Gram-positive bacteria M.luteus, B.megaterium, A.viridans, S.aureus and S.saprophyticus. Moderate activity against P.acidilactici and B.subtilis QB935. Also affects Gram-negative bacterium, D22 form of E.coli. The polypeptide is Defensin (Pyrrhocoris apterus (Sap sucking bug)).